A 278-amino-acid polypeptide reads, in one-letter code: S-adenosylmethionine decarboxylase proenzyme (278 aa).

Residues L96–S115 form a disordered region. The active-site Schiff-base intermediate with substrate; via pyruvic acid is S126. Residue S126 is modified to Pyruvic acid (Ser); by autocatalysis. H131 functions as the Proton acceptor; for processing activity in the catalytic mechanism. C154 serves as the catalytic Proton donor; for catalytic activity.

It belongs to the prokaryotic AdoMetDC family. Type 2 subfamily. As to quaternary structure, heterooctamer of four alpha and four beta chains arranged as a tetramer of alpha/beta heterodimers. The cofactor is pyruvate. Post-translationally, is synthesized initially as an inactive proenzyme. Formation of the active enzyme involves a self-maturation process in which the active site pyruvoyl group is generated from an internal serine residue via an autocatalytic post-translational modification. Two non-identical subunits are generated from the proenzyme in this reaction, and the pyruvate is formed at the N-terminus of the alpha chain, which is derived from the carboxyl end of the proenzyme. The post-translation cleavage follows an unusual pathway, termed non-hydrolytic serinolysis, in which the side chain hydroxyl group of the serine supplies its oxygen atom to form the C-terminus of the beta chain, while the remainder of the serine residue undergoes an oxidative deamination to produce ammonia and the pyruvoyl group blocking the N-terminus of the alpha chain.

It catalyses the reaction S-adenosyl-L-methionine + H(+) = S-adenosyl 3-(methylsulfanyl)propylamine + CO2. The protein operates within amine and polyamine biosynthesis; S-adenosylmethioninamine biosynthesis; S-adenosylmethioninamine from S-adenosyl-L-methionine: step 1/1. Catalyzes the decarboxylation of S-adenosylmethionine to S-adenosylmethioninamine (dcAdoMet), the propylamine donor required for the synthesis of the polyamines spermine and spermidine from the diamine putrescine. The chain is S-adenosylmethionine decarboxylase proenzyme from Alkaliphilus metalliredigens (strain QYMF).